Reading from the N-terminus, the 56-residue chain is Conotoxin Cal6.41b (56 aa).

Residues 1–23 (MSGSGAMLLGLLILVAMATSLDT) form the signal peptide. Disulfide bonds link C27–C41, C33–C50, and C40–C54.

As to expression, expressed by the venom duct.

It localises to the secreted. Probable neurotoxin. This chain is Conotoxin Cal6.41b, found in Californiconus californicus (California cone).